We begin with the raw amino-acid sequence, 761 residues long: Zinc finger protein 711 (761 aa).

Residues Lys224, Lys235, and Lys296 each participate in a glycyl lysine isopeptide (Lys-Gly) (interchain with G-Cter in SUMO2) cross-link. C2H2-type zinc fingers lie at residues 383 to 408 (YPCH…HPDH), 414 to 436 (YQCT…LESH), 476 to 499 (HKCK…LAVH), 505 to 527 (HVCV…MRTH), and 533 to 556 (YQCQ…KSKH). The C2H2-type 6; atypical zinc finger occupies 562-584 (YKCEHCPQAFGDERELQRHLDLF). Positions 564, 567, and 580 each coordinate Zn(2+). 6 consecutive C2H2-type zinc fingers follow at residues 590 to 613 (HQCP…ISVH), 619 to 641 (HKCE…SDIH), 647 to 670 (HQCR…LSVH), 676 to 698 (LKCK…MKTH), 704 to 727 (YQCE…ISIH), and 733 to 755 (HRCE…IMRH).

Belongs to the krueppel C2H2-type zinc-finger protein family. In terms of assembly, interacts with PHF8.

The protein localises to the nucleus. In terms of biological role, transcription regulator required for brain development. Probably acts as a transcription factor that binds to the promoter of target genes and recruits PHF8 histone demethylase, leading to activated expression of genes involved in neuron development, such as KDM5C. May compete with transcription factor ARX for activation of expression of KDM5C. This is Zinc finger protein 711 (Znf711) from Mus musculus (Mouse).